Reading from the N-terminus, the 396-residue chain is uncharacterized protein (396 aa).

This is an uncharacterized protein from Pseudomonas amyloderamosa.